Reading from the N-terminus, the 642-residue chain is Sodium-dependent phosphate transport protein 2A (642 aa).

Residues 1 to 106 (MISYGEQLSS…LRRTAMTLLK (106 aa)) lie on the Cytoplasmic side of the membrane. Ser-14 and Ser-37 each carry phosphoserine. A helical membrane pass occupies residues 107-128 (LPLMVTFLYLFVCSLDVLSSAF). Topologically, residues 129 to 148 (QLAGGKVAGDIFKDNAILAN) are extracellular. The chain crosses the membrane as a helical span at residues 149–166 (PVAGLVVGILVTVLVQSS). Residues 167 to 168 (ST) lie on the Cytoplasmic side of the membrane. A helical membrane pass occupies residues 169–188 (ATSIIVSMVSSGLLEVSSAI). Residues 189-350 (PIIMGSNIGT…HIFVDTQLPD (162 aa)) are Extracellular-facing. 2 disulfide bridges follow: Cys-228–Cys-525 and Cys-309–Cys-339. Residues Asn-301, Asn-326, and Asn-333 are each glycosylated (N-linked (GlcNAc...) asparagine). The chain crosses the membrane as a helical span at residues 351 to 373 (LAVGLILLAGSLVLLCTCLILLV). Topologically, residues 374-415 (KMLNSLLKGQVAKVIQKVINTDLPAPFTWVTGYFAMVVGAAM) are cytoplasmic. The chain crosses the membrane as a helical span at residues 416 to 439 (TFIVQSSSVFTSAITPLVGLGVIS). Residues 440–469 (IERAYPLTLGSNIGTTTTAILAALASPREK) lie on the Extracellular side of the membrane. The chain crosses the membrane as a helical span at residues 470-490 (LSSSFQIALCHFFFNISGILL). The Cytoplasmic segment spans residues 491-516 (WYPLPCTRLPIRMAKALGKRTAKYRW). At Thr-511 the chain carries Phosphothreonine; by PKC. The helical transmembrane segment at 517 to 537 (FAVLYLLVCFLLLPSLVFGIS) threads the bilayer. Residues 538-542 (MAGWR) are Extracellular-facing. A helical membrane pass occupies residues 543–564 (AMVGVGAPFGALLAFVVLINVL). The Cytoplasmic segment spans residues 565–642 (QSRSPGRLPK…LPAHHNATRL (78 aa)). At Ser-610 the chain carries Phosphoserine. Position 626 is a phosphothreonine (Thr-626). Ser-628 bears the Phosphoserine mark.

It belongs to the SLC34A transporter family. As to quaternary structure, interacts via its C-terminal region with NHERF4. Interacts with NHERF1. Interacts with TMEM174; regulates SLC34A1 internalization by PTH and FGF23. Expressed in the kidney cortex.

It localises to the apical cell membrane. It is found in the cell membrane. It catalyses the reaction 3 Na(+)(out) + phosphate(out) = 3 Na(+)(in) + phosphate(in). With respect to regulation, transport activity is significantly increased in response to dietary phosphate deprivation. Involved in actively transporting phosphate into cells via Na(+) cotransport in the renal brush border membrane. The cotransport has a Na(+):Pi stoichiometry of 3:1 and is electrogenic. In Oryctolagus cuniculus (Rabbit), this protein is Sodium-dependent phosphate transport protein 2A.